The sequence spans 418 residues: Gamma-glutamyl phosphate reductase (418 aa).

It belongs to the gamma-glutamyl phosphate reductase family.

The protein resides in the cytoplasm. The catalysed reaction is L-glutamate 5-semialdehyde + phosphate + NADP(+) = L-glutamyl 5-phosphate + NADPH + H(+). It participates in amino-acid biosynthesis; L-proline biosynthesis; L-glutamate 5-semialdehyde from L-glutamate: step 2/2. Catalyzes the NADPH-dependent reduction of L-glutamate 5-phosphate into L-glutamate 5-semialdehyde and phosphate. The product spontaneously undergoes cyclization to form 1-pyrroline-5-carboxylate. The polypeptide is Gamma-glutamyl phosphate reductase (Photobacterium profundum (strain SS9)).